The following is a 295-amino-acid chain: 3-methyl-2-oxobutanoate hydroxymethyltransferase (295 aa).

Residues 1–30 (MTSGRAMSPEETAPYGTGPARAESAPDAPA) form a disordered region. Mg(2+) is bound by residues D76 and D115. Residues 76 to 77 (DS), D115, and K145 contribute to the 3-methyl-2-oxobutanoate site. Residue E147 participates in Mg(2+) binding. E213 functions as the Proton acceptor in the catalytic mechanism.

This sequence belongs to the PanB family. In terms of assembly, homodecamer; pentamer of dimers. Requires Mg(2+) as cofactor.

The protein localises to the cytoplasm. It catalyses the reaction 3-methyl-2-oxobutanoate + (6R)-5,10-methylene-5,6,7,8-tetrahydrofolate + H2O = 2-dehydropantoate + (6S)-5,6,7,8-tetrahydrofolate. It functions in the pathway cofactor biosynthesis; (R)-pantothenate biosynthesis; (R)-pantoate from 3-methyl-2-oxobutanoate: step 1/2. Catalyzes the reversible reaction in which hydroxymethyl group from 5,10-methylenetetrahydrofolate is transferred onto alpha-ketoisovalerate to form ketopantoate. The polypeptide is 3-methyl-2-oxobutanoate hydroxymethyltransferase (Nocardioides sp. (strain ATCC BAA-499 / JS614)).